The primary structure comprises 1382 residues: Ninein-like protein (1382 aa).

EF-hand domains lie at 7-42 (HYVS…LHLE) and 41-76 (LEQQ…VLSS). The interval 144–164 (ASLESVESPKSDEEAESTKEA) is disordered. S148 bears the Phosphoserine mark. Basic and acidic residues predominate over residues 150-164 (ESPKSDEEAESTKEA). EF-hand domains follow at residues 196–231 (TPES…VGLQ) and 233–268 (LEKE…HEPA). The Ca(2+) site is built by D246, D248, D250, K252, and E257. 3 coiled-coil regions span residues 384 to 424 (QELS…MDDC), 484 to 579 (AGLR…WARL), and 616 to 699 (IETE…QLQD). The KEN box signature appears at 495–497 (KEN). The short motif at 633-641 (RTQLETKVN) is the D-box element. Disordered regions lie at residues 857-969 (PLAW…ASCR) and 982-1006 (RARS…GALE). Residues 991–1004 (QEQASEQQARAEGA) are compositionally biased toward low complexity. The stretch at 1046-1375 (ETKIALEREK…RALNKLVSRI (330 aa)) forms a coiled coil.

In terms of assembly, interacts with gamma-tubulin and TUBGCP4. Interacts with anaphase promoting complex/cyclosome (APC/C). Interacts with CDC20 and FZR1. Isoform 2 interacts with LCA5 and USH2A. Isoform 2 interacts with DZANK1. Phosphorylated by PLK1 which disrupts its centrosome association and interaction with gamma-tubulin. Post-translationally, ubiquitinated by the APC/C complex leading to its degradation. Expressed in KYSE-150 esophageal carcinoma, HeLa cervical carcinoma and U2OS osteosarcoma cells. Expression is regulated in a cell cycle-dependent manner and peaks during G2/M phase (at protein level). Expressed in fetal heart, skeletal muscle, liver, lung and cochlea, and in adult brain, testis, kidney and retina.

The protein resides in the cytoplasm. Its subcellular location is the cytoskeleton. It is found in the microtubule organizing center. It localises to the centrosome. Its function is as follows. Involved in the microtubule organization in interphase cells. Overexpression induces the fragmentation of the Golgi, and causes lysosomes to disperse toward the cell periphery; it also interferes with mitotic spindle assembly. Involved in vesicle transport in photoreceptor cells. May play a role in ovarian carcinogenesis. The polypeptide is Ninein-like protein (NINL) (Homo sapiens (Human)).